Reading from the N-terminus, the 909-residue chain is Nitrate reductase [NADH] (909 aa).

Mo-molybdopterin is bound at residue Cys187. In terms of domain architecture, Cytochrome b5 heme-binding spans 535–610; the sequence is SKMYSMSEVK…LEDFRIGELI (76 aa). The heme site is built by His570 and His593. The region spanning 652–764 is the FAD-binding FR-type domain; it reads REKIPCKLVD…KGPLGHIEYQ (113 aa). Residues 704-707, 721-725, Phe726, Phe733, 738-740, and Thr791 each bind FAD; these read RAYT, VVKIY, and QMS.

It belongs to the nitrate reductase family. As to quaternary structure, homodimer. The cofactor is FAD. Heme serves as cofactor. Mo-molybdopterin is required as a cofactor.

The catalysed reaction is nitrite + NAD(+) + H2O = nitrate + NADH + H(+). Regulated by the nitrogen source and controlled by the circadian rhythm. In terms of biological role, nitrate reductase is a key enzyme involved in the first step of nitrate assimilation in plants, fungi and bacteria. The sequence is that of Nitrate reductase [NADH] (NIA) from Petunia hybrida (Petunia).